A 367-amino-acid chain; its full sequence is Glycerol dehydrogenase (367 aa).

5 residues coordinate NAD(+): aspartate 37, glycine 94, lysine 95, threonine 116, and serine 119. Residue aspartate 121 participates in glycerol binding. The NAD(+) site is built by serine 125, leucine 127, and tyrosine 131. Positions 171, 254, and 271 each coordinate Zn(2+). Histidine 254 provides a ligand contact to glycerol.

Belongs to the iron-containing alcohol dehydrogenase family. Requires Zn(2+) as cofactor.

The catalysed reaction is glycerol + NAD(+) = dihydroxyacetone + NADH + H(+). It functions in the pathway polyol metabolism; glycerol fermentation; glycerone phosphate from glycerol (oxidative route): step 1/2. Functionally, catalyzes the NAD-dependent oxidation of glycerol to dihydroxyacetone (glycerone). Allows microorganisms to utilize glycerol as a source of carbon under anaerobic conditions. This chain is Glycerol dehydrogenase (gldA), found in Escherichia coli O6:H1 (strain CFT073 / ATCC 700928 / UPEC).